We begin with the raw amino-acid sequence, 505 residues long: Histidine ammonia-lyase (505 aa).

The segment at residues 141–143 (ASG) is a cross-link (5-imidazolinone (Ala-Gly)). The residue at position 142 (S142) is a 2,3-didehydroalanine (Ser).

It belongs to the PAL/histidase family. In terms of processing, contains an active site 4-methylidene-imidazol-5-one (MIO), which is formed autocatalytically by cyclization and dehydration of residues Ala-Ser-Gly.

The protein localises to the cytoplasm. The catalysed reaction is L-histidine = trans-urocanate + NH4(+). It functions in the pathway amino-acid degradation; L-histidine degradation into L-glutamate; N-formimidoyl-L-glutamate from L-histidine: step 1/3. This chain is Histidine ammonia-lyase, found in Bacillus cereus (strain ZK / E33L).